The primary structure comprises 338 residues: Large ribosomal subunit protein uL10 (338 aa).

The disordered stretch occupies residues 297 to 338 (PSAQQTQTQQSTAEEKKEEKKEEEKKGPSEEEIGSGLASLFG). Residues 298–308 (SAQQTQTQQST) are compositionally biased toward low complexity. Residues 309-325 (AEEKKEEKKEEEKKGPS) show a composition bias toward basic and acidic residues.

Belongs to the universal ribosomal protein uL10 family. In terms of assembly, part of the 50S ribosomal subunit. Forms part of the ribosomal stalk which helps the ribosome interact with GTP-bound translation factors. Forms a heptameric L10(L12)2(L12)2(L12)2 complex, where L10 forms an elongated spine to which the L12 dimers bind in a sequential fashion.

Its function is as follows. Forms part of the ribosomal stalk, playing a central role in the interaction of the ribosome with GTP-bound translation factors. The protein is Large ribosomal subunit protein uL10 of Saccharolobus islandicus (strain M.14.25 / Kamchatka #1) (Sulfolobus islandicus).